A 668-amino-acid polypeptide reads, in one-letter code: Fructose-1,6-bisphosphatase class 3 (668 aa).

Belongs to the FBPase class 3 family. Requires Mn(2+) as cofactor.

It carries out the reaction beta-D-fructose 1,6-bisphosphate + H2O = beta-D-fructose 6-phosphate + phosphate. The protein operates within carbohydrate biosynthesis; gluconeogenesis. The polypeptide is Fructose-1,6-bisphosphatase class 3 (Clostridium botulinum (strain Kyoto / Type A2)).